The sequence spans 218 residues: Glutathione S-transferase Mu 6 (218 aa).

Residues Met1–Gly88 enclose the GST N-terminal domain. Glutathione is bound by residues Tyr7–Trp8, Trp46–Lys50, Asn59–Leu60, and Gln72–Ser73. A GST C-terminal domain is found at Thr90 to Val208. Tyr116 is a substrate binding site.

This sequence belongs to the GST superfamily. Mu family. As to quaternary structure, homodimer. In terms of tissue distribution, expressed in liver, stomach and small intestine. Not expressed in spleen, kidney, colon, heart, muscle, brain or lung.

Its subcellular location is the cytoplasm. The catalysed reaction is RX + glutathione = an S-substituted glutathione + a halide anion + H(+). Functionally, conjugation of reduced glutathione to a wide number of exogenous and endogenous hydrophobic electrophiles. The sequence is that of Glutathione S-transferase Mu 6 (Gstm6) from Mus musculus (Mouse).